Consider the following 630-residue polypeptide: DNA topoisomerase 4 subunit B (630 aa).

ATP-binding positions include Y5, N42, D69, G110 to I116, and K334. Positions T412 to P525 constitute a Toprim domain. E418, D490, and D492 together coordinate Mg(2+).

It belongs to the type II topoisomerase family. ParE type 1 subfamily. As to quaternary structure, heterotetramer composed of ParC and ParE. Mg(2+) serves as cofactor. It depends on Mn(2+) as a cofactor. Ca(2+) is required as a cofactor.

The enzyme catalyses ATP-dependent breakage, passage and rejoining of double-stranded DNA.. With respect to regulation, pyrrolopyrimidines inhibit both GyrB and its paralog in topoisomerase IV (parE). Topoisomerase IV is essential for chromosome segregation; it is the principal protein responsible for decatenating newly replicated chromosomes. It relaxes supercoiled DNA. MukB stimulates the relaxation activity of topoisomerase IV and also has a modest effect on decatenation. The polypeptide is DNA topoisomerase 4 subunit B (Escherichia coli (strain K12)).